Consider the following 585-residue polypeptide: Arginine--tRNA ligase (585 aa).

The 'HIGH' region signature appears at 131 to 141 (ANPTGPMHVGH).

It belongs to the class-I aminoacyl-tRNA synthetase family. In terms of assembly, monomer.

It localises to the cytoplasm. It catalyses the reaction tRNA(Arg) + L-arginine + ATP = L-arginyl-tRNA(Arg) + AMP + diphosphate. The chain is Arginine--tRNA ligase from Chelativorans sp. (strain BNC1).